The following is a 275-amino-acid chain: Large ribosomal subunit protein uL2c (275 aa).

Disordered regions lie at residues 32–53 (SLSK…TCRH) and 218–242 (PTVR…APIG).

It belongs to the universal ribosomal protein uL2 family. As to quaternary structure, part of the 50S ribosomal subunit.

Its subcellular location is the plastid. The protein resides in the chloroplast. The polypeptide is Large ribosomal subunit protein uL2c (rpl2) (Tetradesmus obliquus (Green alga)).